Here is a 317-residue protein sequence, read N- to C-terminus: Flagellar hook-associated protein 3 (317 aa).

This sequence belongs to the bacterial flagellin family.

The protein localises to the secreted. Its subcellular location is the bacterial flagellum. The sequence is that of Flagellar hook-associated protein 3 (flgL) from Escherichia coli (strain K12).